An 88-amino-acid chain; its full sequence is Apolipoprotein C-I (88 aa).

The signal sequence occupies residues 1 to 26 (MRLFLSLPVLVVVLAMVLEGPAPAQA).

This sequence belongs to the apolipoprotein C1 family.

The protein localises to the secreted. Its function is as follows. Inhibitor of lipoprotein binding to the low density lipoprotein (LDL) receptor, LDL receptor-related protein, and very low density lipoprotein (VLDL) receptor. Associates with high density lipoproteins (HDL) and the triacylglycerol-rich lipoproteins in the plasma and makes up about 10% of the protein of the VLDL and 2% of that of HDL. Appears to interfere directly with fatty acid uptake and is also the major plasma inhibitor of cholesteryl ester transfer protein (CETP). Binds free fatty acids and reduces their intracellular esterification. Modulates the interaction of APOE with beta-migrating VLDL and inhibits binding of beta-VLDL to the LDL receptor-related protein. In Arctocephalus gazella (Antarctic fur seal), this protein is Apolipoprotein C-I (APOC1).